Reading from the N-terminus, the 121-residue chain is MTTSAMTAPDTRRQLQHVETLRRFLRGDSCFVHDLRGMMDYHDGLSRRQQRAFCRASRVLTDPEPIQSEAEGENKQFTEHTHKVVSFFIKSVFVFPYLVLPNCCQVSVDRSRVPETGGRWL.

The protein belongs to the HHV-5 UL30 protein family.

This is an uncharacterized protein from Human cytomegalovirus (strain AD169) (HHV-5).